We begin with the raw amino-acid sequence, 415 residues long: [Pyruvate dehydrogenase (acetyl-transferring)] kinase isozyme 3, mitochondrial (415 aa).

The Histidine kinase domain maps to 131–362; it reads IEYKEKFGFD…DAVIYLKALS (232 aa). 247–254 lines the ATP pocket; it reads ELFKNSMR. Residue lysine 278 is modified to N6-succinyllysine. ATP contacts are provided by residues aspartate 287, 306-307, and 323-328; these read ST and GFGYGL. Positions 383 to 415 are disordered; the sequence is TPEADDWSNPSSEPRDASKYKAKQDKIKSNRTF. Residues 395 to 415 are compositionally biased toward basic and acidic residues; sequence EPRDASKYKAKQDKIKSNRTF.

The protein belongs to the PDK/BCKDK protein kinase family. As to quaternary structure, homodimer. Interacts with the pyruvate dehydrogenase complex subunit DLAT, and is part of the multimeric pyruvate dehydrogenase complex that contains multiple copies of pyruvate dehydrogenase (E1), dihydrolipoamide acetyltransferase (DLAT, E2) and lipoamide dehydrogenase (DLD, E3).

The protein resides in the mitochondrion matrix. It carries out the reaction L-seryl-[pyruvate dehydrogenase E1 alpha subunit] + ATP = O-phospho-L-seryl-[pyruvate dehydrogenase E1 alpha subunit] + ADP + H(+). Inhibits pyruvate dehydrogenase activity by phosphorylation of the E1 subunit PDHA1, and thereby regulates glucose metabolism and aerobic respiration. Can also phosphorylate PDHA2. Decreases glucose utilization and increases fat metabolism in response to prolonged fasting, and as adaptation to a high-fat diet. Plays a role in glucose homeostasis and in maintaining normal blood glucose levels in function of nutrient levels and under starvation. Plays a role in the generation of reactive oxygen species. This Mus musculus (Mouse) protein is [Pyruvate dehydrogenase (acetyl-transferring)] kinase isozyme 3, mitochondrial (Pdk3).